Consider the following 420-residue polypeptide: Pectate lyase (420 aa).

A signal peptide spans 1 to 21; that stretch reads MKKVMLATALFLGLTPAGANA. The tract at residues 117–139 is disordered; that stretch reads TWGKKEPSGTQEEARARSQKNQK. Residues 119–132 show a composition bias toward basic and acidic residues; sequence GKKEPSGTQEEARA. The Ca(2+) site is built by Asp205, Asp244, and Asp248. The active site involves Arg300.

Belongs to the polysaccharide lyase 1 family. As to quaternary structure, monomer. Ca(2+) serves as cofactor.

It localises to the secreted. The catalysed reaction is Eliminative cleavage of (1-&gt;4)-alpha-D-galacturonan to give oligosaccharides with 4-deoxy-alpha-D-galact-4-enuronosyl groups at their non-reducing ends.. Its pathway is glycan metabolism; pectin degradation; 2-dehydro-3-deoxy-D-gluconate from pectin: step 2/5. In terms of biological role, produces unsaturated products from polygalacturonate. This is Pectate lyase (pel) from Bacillus subtilis (strain 168).